A 673-amino-acid chain; its full sequence is Clotting factor G alpha subunit (673 aa).

A signal peptide spans 1–19 (MLVLLCCVVLHVGVARICC). One can recognise a GH16 domain in the interval 27–257 (LVWSDEFTNG…YVRVYQDAST (231 aa)). The active-site Nucleophile is Glu-137. Glu-142 functions as the Proton donor in the catalytic mechanism. A glycan (N-linked (GlcNAc...) asparagine) is linked at Asn-186. Residues 266-404 (LDGYYFVQNR…NQLSGQWKLI (139 aa)) form the Ricin B-type lectin domain. 2 CBM6 domains span residues 411-533 (KLIQ…IKIT) and 549-671 (KLIQ…IRIT).

Belongs to the glycosyl hydrolase 16 family. As to quaternary structure, clotting factor G is a heterodimer composed of two non-covalently associated subunits, alpha and beta. In terms of processing, in presence of (1-&gt;3)-beta-glucan, proteolytically cleaved into a 55kDa and a 17kDa forms. Expressed in hemocytes (at protein level).

Its function is as follows. Component of the heterodimer clotting factor G which may play a role in defense mechanisms against fungi. Initiates a (1-&gt;3)-beta-glucan-sensing clotting pathway whereby the alpha subunit binds to glucans containing (1-&gt;3)-beta linkages, which are components of the fungal cell wall, and the beta subunit catalyzes the activation of proclotting enzyme. This chain is Clotting factor G alpha subunit, found in Tachypleus tridentatus (Japanese horseshoe crab).